A 162-amino-acid chain; its full sequence is Transcription elongation factor GreA (162 aa).

The stretch at 9-38 (QGYKALEEELARLKSERPEIIQAIKEAREE) forms a coiled coil.

This sequence belongs to the GreA/GreB family.

Functionally, necessary for efficient RNA polymerase transcription elongation past template-encoded arresting sites. The arresting sites in DNA have the property of trapping a certain fraction of elongating RNA polymerases that pass through, resulting in locked ternary complexes. Cleavage of the nascent transcript by cleavage factors such as GreA or GreB allows the resumption of elongation from the new 3'terminus. GreA releases sequences of 2 to 3 nucleotides. In Desulfovibrio desulfuricans (strain ATCC 27774 / DSM 6949 / MB), this protein is Transcription elongation factor GreA.